A 214-amino-acid chain; its full sequence is Peroxiredoxin-5, mitochondrial (214 aa).

The N-terminal 52 residues, 1 to 52, are a transit peptide targeting the mitochondrion; sequence MGLAGVCALRRSAGYILVGGAGGQSAAAAARRYSEGEWASGGVRSFSRAAAA. Residues 56 to 214 enclose the Thioredoxin domain; that stretch reads IKVGDAIPAV…SLAPNIISQL (159 aa). K75 carries the post-translational modification N6-acetyllysine. K83 is subject to N6-acetyllysine; alternate. Residue K83 is modified to N6-succinyllysine; alternate. C100 acts as the Cysteine sulfenic acid (-SOH) intermediate in catalysis. The S-palmitoyl cysteine moiety is linked to residue C100. C100 and C204 form a disulfide bridge. The residue at position 116 (K116) is an N6-succinyllysine. S171 and S182 each carry phosphoserine. A Microbody targeting signal motif is present at residues 212–214; it reads SQL.

It belongs to the peroxiredoxin family. Prx5 subfamily. In terms of assembly, monomer. S-palmitoylated. Palmitoylation occurs on the active site, inhibiting its reactivity; therefore PRDX5 palmitoylation status determines its antioxidant capacity. Post-translationally, S-palmitoylated. Depalmitoylated by ABHD10. Widely expressed.

The protein resides in the mitochondrion. It localises to the cytoplasm. It is found in the peroxisome matrix. The catalysed reaction is a hydroperoxide + [thioredoxin]-dithiol = an alcohol + [thioredoxin]-disulfide + H2O. Thiol-specific peroxidase that catalyzes the reduction of hydrogen peroxide and organic hydroperoxides to water and alcohols, respectively. Plays a role in cell protection against oxidative stress by detoxifying peroxides and as sensor of hydrogen peroxide-mediated signaling events. This is Peroxiredoxin-5, mitochondrial from Homo sapiens (Human).